Here is a 122-residue protein sequence, read N- to C-terminus: Ribosome-binding factor A (122 aa).

This sequence belongs to the RbfA family. In terms of assembly, monomer. Binds 30S ribosomal subunits, but not 50S ribosomal subunits or 70S ribosomes.

It is found in the cytoplasm. In terms of biological role, one of several proteins that assist in the late maturation steps of the functional core of the 30S ribosomal subunit. Associates with free 30S ribosomal subunits (but not with 30S subunits that are part of 70S ribosomes or polysomes). Required for efficient processing of 16S rRNA. May interact with the 5'-terminal helix region of 16S rRNA. The protein is Ribosome-binding factor A of Moorella thermoacetica (strain ATCC 39073 / JCM 9320).